Here is an 86-residue protein sequence, read N- to C-terminus: Small ribosomal subunit protein uS17 (86 aa).

The protein belongs to the universal ribosomal protein uS17 family. In terms of assembly, part of the 30S ribosomal subunit.

Its function is as follows. One of the primary rRNA binding proteins, it binds specifically to the 5'-end of 16S ribosomal RNA. This Lactococcus lactis subsp. cremoris (strain SK11) protein is Small ribosomal subunit protein uS17.